We begin with the raw amino-acid sequence, 459 residues long: MSNPQQQFISDELSQLQKEIISKNPQDVLQFCANYFNTKLQAQRSELWSQQAKAEAAGIDLFPSVDHVNVNSSGVSIVNDRQPSFKSPFGVNDPHSNHDEDPHAKDTKTDTAAAAVGGGIFKSNFDVKKSASNPPTKEVDPDDPSKPSSSSQPNQQSASASSKTPSSKIPVAFNANRRTSVSAEALNPAKLKLDSWKPPVNNLSITEEETLANNLKNNFLFKQLDANSKKTVIAALQQKSFAKDTVIIQQGDEGDFFYIIETGTVDFYVNDAKVSSSSEGSSFGELALMYNSPRAATAVAATDVVCWALDRLTFRRILLEGTFNKRLMYEDFLKDIEVLKSLSDHARSKLADALSTEMYHKGDKIVTEGEQGENFYLIESGNCQVYNEKLGNIKQLTKGDYFGELALIKDLPRQATVEALDNVIVATLGKSGFQRLLGPVVEVLKEQDPTKSQDPTAGH.

The tract at residues 30–219 (QFCANYFNTK…TLANNLKNNF (190 aa)) is dimerization and phosphorylation. Disordered regions lie at residues 78-109 (VNDR…DTKT) and 125-168 (FDVK…PSSK). Over residues 95 to 109 (HSNHDEDPHAKDTKT) the composition is skewed to basic and acidic residues. The span at 146–168 (KPSSSSQPNQQSASASSKTPSSK) shows a compositional bias: low complexity. Position 180 is a phosphoserine (S180). Residues 220 to 335 (LFKQ…FLKD), E285, R294, 338 to 454 (VLKS…KSQD), E404, and R413 each bind 3',5'-cyclic AMP.

It belongs to the cAMP-dependent kinase regulatory chain family. In terms of assembly, tetramer, composed of 2 regulatory (R) and 2 catalytic (C) subunits. In the presence of cAMP it dissociates into 2 active monomeric C subunits and an R dimer.

The chain is cAMP-dependent protein kinase regulatory subunit (BCY1) from Candida albicans (strain SC5314 / ATCC MYA-2876) (Yeast).